The following is a 500-amino-acid chain: Glycerol kinase (500 aa).

Threonine 12 is an ADP binding site. Residues threonine 12, threonine 13, and serine 14 each contribute to the ATP site. Sn-glycerol 3-phosphate is bound at residue threonine 12. Position 16 (arginine 16) interacts with ADP. Sn-glycerol 3-phosphate is bound by residues arginine 82, glutamate 83, tyrosine 134, and aspartate 244. Glycerol is bound by residues arginine 82, glutamate 83, tyrosine 134, aspartate 244, and glutamine 245. The ADP site is built by threonine 266 and glycine 309. ATP-binding residues include threonine 266, glycine 309, glutamine 313, and glycine 410. ADP is bound by residues glycine 410 and asparagine 414.

The protein belongs to the FGGY kinase family. Homotetramer and homodimer (in equilibrium).

The enzyme catalyses glycerol + ATP = sn-glycerol 3-phosphate + ADP + H(+). Its pathway is polyol metabolism; glycerol degradation via glycerol kinase pathway; sn-glycerol 3-phosphate from glycerol: step 1/1. Activated by phosphorylation and inhibited by fructose 1,6-bisphosphate (FBP). Key enzyme in the regulation of glycerol uptake and metabolism. Catalyzes the phosphorylation of glycerol to yield sn-glycerol 3-phosphate. In Alkaliphilus metalliredigens (strain QYMF), this protein is Glycerol kinase.